A 141-amino-acid chain; its full sequence is Small ribosomal subunit protein uS12 (141 aa).

Residues 1 to 11 (MPTISQLVTTS) show a composition bias toward polar residues. The tract at residues 1–22 (MPTISQLVTTSRQDKNYKSKSP) is disordered. Asp-102 is modified (3-methylthioaspartic acid).

The protein belongs to the universal ribosomal protein uS12 family. In terms of assembly, part of the 30S ribosomal subunit. Contacts proteins S8 and S17. May interact with IF1 in the 30S initiation complex.

With S4 and S5 plays an important role in translational accuracy. Functionally, interacts with and stabilizes bases of the 16S rRNA that are involved in tRNA selection in the A site and with the mRNA backbone. Located at the interface of the 30S and 50S subunits, it traverses the body of the 30S subunit contacting proteins on the other side and probably holding the rRNA structure together. The combined cluster of proteins S8, S12 and S17 appears to hold together the shoulder and platform of the 30S subunit. The protein is Small ribosomal subunit protein uS12 of Acholeplasma laidlawii (strain PG-8A).